Reading from the N-terminus, the 216-residue chain is Redox-sensing transcriptional repressor Rex (216 aa).

Positions 20 to 59 (QYYRLFKSLVEENVTRTNSQLISEKIGVDAATIRRDFSLF) form a DNA-binding region, H-T-H motif. NAD(+) is bound at residue 94 to 99 (GVGNLG).

The protein belongs to the transcriptional regulatory Rex family. As to quaternary structure, homodimer.

The protein resides in the cytoplasm. Modulates transcription in response to changes in cellular NADH/NAD(+) redox state. This is Redox-sensing transcriptional repressor Rex from Lactococcus lactis subsp. cremoris (Streptococcus cremoris).